The primary structure comprises 1170 residues: Integrin alpha-2 (1170 aa).

Positions 1–18 are cleaved as a signal peptide; sequence PLQLVLVFSQGILNCCVA. Over 19–1121 the chain is Extracellular; that stretch reads YNVGLPKAKI…KPHEKVEVPT (1103 aa). FG-GAP repeat units lie at residues 23 to 81 and 90 to 150; these read LPKA…TTTC and TSMS…LRTS. Residues cysteine 72 and cysteine 81 are joined by a disulfide bond. Asparagine 94, asparagine 101, and asparagine 332 each carry an N-linked (GlcNAc...) asparagine glycan. Positions 177–354 constitute a VWFA domain; sequence WDAVKNFLEK…TIGEQIFSIE (178 aa). FG-GAP repeat units follow at residues 355–409, 412–464, 466–528, 529–587, and 591–653; these read GTVQ…LIFS, AFEQ…ENGN, TVIQ…ILNW, HQFL…MIRL, and QKIL…FTPK. Residues asparagine 421, asparagine 449, and asparagine 464 are each glycosylated (N-linked (GlcNAc...) asparagine). A Cell attachment site motif is present at residues 472 to 474; the sequence is RGD. Residues aspartate 488, asparagine 490, aspartate 492, aspartate 496, aspartate 552, asparagine 554, aspartate 556, aspartate 560, aspartate 616, asparagine 618, aspartate 620, and aspartate 624 each contribute to the Ca(2+) site. Residues cysteine 669 and cysteine 726 are joined by a disulfide bond. Asparagine 688 and asparagine 748 each carry an N-linked (GlcNAc...) asparagine glycan. 2 disulfides stabilise this stretch: cysteine 778–cysteine 784 and cysteine 854–cysteine 865. N-linked (GlcNAc...) asparagine glycosylation is present at asparagine 945. 2 disulfides stabilise this stretch: cysteine 1008-cysteine 1039 and cysteine 1044-cysteine 1049. N-linked (GlcNAc...) asparagine glycosylation is found at asparagine 1063 and asparagine 1070. The chain crosses the membrane as a helical span at residues 1122-1143; it reads GVIVGSVIAGILLLLALVAILW. At 1144-1170 the chain is on the cytoplasmic side; the sequence is KLGFFKRKYEKMAKNPDETDETTELNS. Residues 1146-1150 carry the GFFKR motif motif; sequence GFFKR.

Belongs to the integrin alpha chain family. As to quaternary structure, heterodimer of an alpha and a beta subunit. Alpha-2 associates with beta-1. Interacts with HPS5 and RAB21.

It is found in the membrane. Functionally, integrin alpha-2/beta-1 is a receptor for laminin, collagen, collagen C-propeptides, fibronectin and E-cadherin. It recognizes the proline-hydroxylated sequence G-F-P-G-E-R in collagen. It is responsible for adhesion of platelets and other cells to collagens, modulation of collagen and collagenase gene expression, force generation and organization of newly synthesized extracellular matrix. In Bos taurus (Bovine), this protein is Integrin alpha-2 (ITGA2).